Reading from the N-terminus, the 375-residue chain is Growth/differentiation factor 8 (375 aa).

A signal peptide spans 1–23 (MQKLQIYVYIYLFMLIVAGPVDL). Positions 24–266 (NENSEQKENV…VTDTPKRSRR (243 aa)) are excised as a propeptide. Asparagine 71 carries an N-linked (GlcNAc...) asparagine glycan. Cystine bridges form between cysteine 272/cysteine 282, cysteine 281/cysteine 340, cysteine 309/cysteine 372, and cysteine 313/cysteine 374.

It belongs to the TGF-beta family. As to quaternary structure, homodimer; disulfide-linked. Interacts with WFIKKN2, leading to inhibit its activity. Interacts with FSTL3. Synthesized as large precursor molecule that undergoes proteolytic cleavage to generate an N-terminal propeptide and a disulfide linked C-terminal dimer, which is the biologically active molecule. The circulating form consists of a latent complex of the C-terminal dimer and other proteins, including its propeptide, which maintain the C-terminal dimer in a latent, inactive state. Ligand activation requires additional cleavage of the prodomain by a tolloid-like metalloproteinase.

It localises to the secreted. Acts specifically as a negative regulator of skeletal muscle growth. This is Growth/differentiation factor 8 (MSTN) from Sus scrofa (Pig).